The chain runs to 201 residues: Large ribosomal subunit protein uL4 (201 aa).

Residues 43–66 (TRAQKTRSEVSGGGKKPWRQKGTG) are disordered.

This sequence belongs to the universal ribosomal protein uL4 family. As to quaternary structure, part of the 50S ribosomal subunit.

In terms of biological role, one of the primary rRNA binding proteins, this protein initially binds near the 5'-end of the 23S rRNA. It is important during the early stages of 50S assembly. It makes multiple contacts with different domains of the 23S rRNA in the assembled 50S subunit and ribosome. Forms part of the polypeptide exit tunnel. The protein is Large ribosomal subunit protein uL4 of Tolumonas auensis (strain DSM 9187 / NBRC 110442 / TA 4).